Reading from the N-terminus, the 400-residue chain is Nicotinate phosphoribosyltransferase (400 aa).

H220 is modified (phosphohistidine; by autocatalysis).

The protein belongs to the NAPRTase family. In terms of processing, transiently phosphorylated on a His residue during the reaction cycle. Phosphorylation strongly increases the affinity for substrates and increases the rate of nicotinate D-ribonucleotide production. Dephosphorylation regenerates the low-affinity form of the enzyme, leading to product release.

It carries out the reaction nicotinate + 5-phospho-alpha-D-ribose 1-diphosphate + ATP + H2O = nicotinate beta-D-ribonucleotide + ADP + phosphate + diphosphate. Its pathway is cofactor biosynthesis; NAD(+) biosynthesis; nicotinate D-ribonucleotide from nicotinate: step 1/1. Its function is as follows. Catalyzes the synthesis of beta-nicotinate D-ribonucleotide from nicotinate and 5-phospho-D-ribose 1-phosphate at the expense of ATP. This chain is Nicotinate phosphoribosyltransferase, found in Escherichia coli O157:H7.